Here is a 156-residue protein sequence, read N- to C-terminus: Small ribosomal subunit protein uS7 (156 aa).

The protein belongs to the universal ribosomal protein uS7 family. Part of the 30S ribosomal subunit. Contacts proteins S9 and S11.

In terms of biological role, one of the primary rRNA binding proteins, it binds directly to 16S rRNA where it nucleates assembly of the head domain of the 30S subunit. Is located at the subunit interface close to the decoding center, probably blocks exit of the E-site tRNA. The sequence is that of Small ribosomal subunit protein uS7 from Exiguobacterium sibiricum (strain DSM 17290 / CCUG 55495 / CIP 109462 / JCM 13490 / 255-15).